We begin with the raw amino-acid sequence, 377 residues long: Nitric oxide reductase FlRd-NAD(+) reductase (377 aa).

Belongs to the FAD-dependent oxidoreductase family. FAD serves as cofactor.

Its subcellular location is the cytoplasm. It carries out the reaction 2 reduced [nitric oxide reductase rubredoxin domain] + NAD(+) + H(+) = 2 oxidized [nitric oxide reductase rubredoxin domain] + NADH. The protein operates within nitrogen metabolism; nitric oxide reduction. One of at least two accessory proteins for anaerobic nitric oxide (NO) reductase. Reduces the rubredoxin moiety of NO reductase. The sequence is that of Nitric oxide reductase FlRd-NAD(+) reductase from Salmonella dublin (strain CT_02021853).